Reading from the N-terminus, the 376-residue chain is Carbamoyl phosphate synthase small chain (376 aa).

Residues 1-187 (MKALLVLEDG…AEDGSYAWRG (187 aa)) form a CPSase region. Residues serine 45, glycine 239, and glycine 241 each coordinate L-glutamine. A Glutamine amidotransferase type-1 domain is found at 191–376 (PLLVYDFGIK…RKIIGESAGA (186 aa)). Residue cysteine 266 is the Nucleophile of the active site. Residues leucine 267, glutamine 270, asparagine 308, glycine 310, and phenylalanine 311 each coordinate L-glutamine. Residues histidine 349 and glutamate 351 contribute to the active site.

This sequence belongs to the CarA family. Composed of two chains; the small (or glutamine) chain promotes the hydrolysis of glutamine to ammonia, which is used by the large (or ammonia) chain to synthesize carbamoyl phosphate. Tetramer of heterodimers (alpha,beta)4.

It catalyses the reaction hydrogencarbonate + L-glutamine + 2 ATP + H2O = carbamoyl phosphate + L-glutamate + 2 ADP + phosphate + 2 H(+). It carries out the reaction L-glutamine + H2O = L-glutamate + NH4(+). It functions in the pathway amino-acid biosynthesis; L-arginine biosynthesis; carbamoyl phosphate from bicarbonate: step 1/1. The protein operates within pyrimidine metabolism; UMP biosynthesis via de novo pathway; (S)-dihydroorotate from bicarbonate: step 1/3. Its function is as follows. Small subunit of the glutamine-dependent carbamoyl phosphate synthetase (CPSase). CPSase catalyzes the formation of carbamoyl phosphate from the ammonia moiety of glutamine, carbonate, and phosphate donated by ATP, constituting the first step of 2 biosynthetic pathways, one leading to arginine and/or urea and the other to pyrimidine nucleotides. The small subunit (glutamine amidotransferase) binds and cleaves glutamine to supply the large subunit with the substrate ammonia. This is Carbamoyl phosphate synthase small chain from Desulfovibrio desulfuricans (strain ATCC 27774 / DSM 6949 / MB).